A 417-amino-acid chain; its full sequence is L-rhamnose isomerase (417 aa).

Mn(2+) contacts are provided by histidine 260, aspartate 292, and aspartate 294.

This sequence belongs to the rhamnose isomerase family. It depends on Mn(2+) as a cofactor.

It is found in the cytoplasm. It catalyses the reaction L-rhamnopyranose = L-rhamnulose. It participates in carbohydrate degradation; L-rhamnose degradation; glycerone phosphate from L-rhamnose: step 1/3. Catalyzes the interconversion of L-rhamnose and L-rhamnulose. In Mannheimia succiniciproducens (strain KCTC 0769BP / MBEL55E), this protein is L-rhamnose isomerase.